Consider the following 498-residue polypeptide: Inosine-5'-monophosphate dehydrogenase (498 aa).

CBS domains follow at residues 98–155 (MVVN…EQKI) and 159–216 (MTRE…PHAS). NAD(+) is bound by residues Asp-253 and 303–305 (GIG). Residues Gly-305 and Gly-307 each coordinate K(+). Residue Ser-308 coordinates IMP. Cys-310 is a binding site for K(+). Catalysis depends on Cys-310, which acts as the Thioimidate intermediate. Residues 343–345 (DGG), 366–367 (GS), and 390–394 (YRGMG) each bind IMP. The active-site Proton acceptor is Arg-406. Residue Glu-421 coordinates IMP. K(+) is bound by residues Glu-475, Ser-476, and His-477.

The protein belongs to the IMPDH/GMPR family. In terms of assembly, homotetramer. K(+) serves as cofactor.

The enzyme catalyses IMP + NAD(+) + H2O = XMP + NADH + H(+). It functions in the pathway purine metabolism; XMP biosynthesis via de novo pathway; XMP from IMP: step 1/1. Mycophenolic acid (MPA) is a non-competitive inhibitor that prevents formation of the closed enzyme conformation by binding to the same site as the amobile flap. In contrast, mizoribine monophosphate (MZP) is a competitive inhibitor that induces the closed conformation. MPA is a potent inhibitor of mammalian IMPDHs but a poor inhibitor of the bacterial enzymes. MZP is a more potent inhibitor of bacterial IMPDH. Catalyzes the conversion of inosine 5'-phosphate (IMP) to xanthosine 5'-phosphate (XMP), the first committed and rate-limiting step in the de novo synthesis of guanine nucleotides, and therefore plays an important role in the regulation of cell growth. The protein is Inosine-5'-monophosphate dehydrogenase of Rhizobium tropici.